We begin with the raw amino-acid sequence, 87 residues long: MKRFEELFAELADKVDRQDPDSGTVQAVQEGRHAIGKKVIEEAGEVWMAAEHEGPDRTAEEISQLLYHLQVLMIACDLDLEDVYEHL.

Belongs to the PRA-PH family.

It localises to the cytoplasm. It carries out the reaction 1-(5-phospho-beta-D-ribosyl)-ATP + H2O = 1-(5-phospho-beta-D-ribosyl)-5'-AMP + diphosphate + H(+). Its pathway is amino-acid biosynthesis; L-histidine biosynthesis; L-histidine from 5-phospho-alpha-D-ribose 1-diphosphate: step 2/9. This is Phosphoribosyl-ATP pyrophosphatase from Salinibacter ruber (strain DSM 13855 / M31).